Consider the following 348-residue polypeptide: Ribonuclease H (348 aa).

Positions 54-65 (NTTSNYGSSTHA) are enriched in polar residues. The tract at residues 54-81 (NTTSNYGSSTHAGGQVSKPHTTQKRVHR) is disordered. Residues 184 to 346 (YNKSMNVYCD…ADFLAKKGAS (163 aa)) enclose the RNase H type-1 domain. D193, E235, D264, and D338 together coordinate Mg(2+).

This sequence belongs to the RNase H family. Mg(2+) is required as a cofactor.

It catalyses the reaction Endonucleolytic cleavage to 5'-phosphomonoester.. Functionally, endonuclease that specifically degrades the RNA of RNA-DNA hybrids. The chain is Ribonuclease H (RNH1) from Saccharomyces cerevisiae (strain ATCC 204508 / S288c) (Baker's yeast).